A 440-amino-acid polypeptide reads, in one-letter code: Chromosome partition protein MukF (440 aa).

Residues 208 to 236 are leucine-zipper; that stretch reads LSETSGTLRELQDTLEAAGDKLQANLLQI.

It belongs to the MukF family. Interacts, and probably forms a ternary complex, with MukE and MukB via its C-terminal region. The complex formation is stimulated by calcium or magnesium. It is required for an interaction between MukE and MukB.

The protein resides in the cytoplasm. The protein localises to the nucleoid. In terms of biological role, involved in chromosome condensation, segregation and cell cycle progression. May participate in facilitating chromosome segregation by condensation DNA from both sides of a centrally located replisome during cell division. Not required for mini-F plasmid partitioning. Probably acts via its interaction with MukB and MukE. Overexpression results in anucleate cells. It has a calcium binding activity. The polypeptide is Chromosome partition protein MukF (Cronobacter sakazakii (strain ATCC BAA-894) (Enterobacter sakazakii)).